A 163-amino-acid chain; its full sequence is Crossover junction endodeoxyribonuclease RuvC (163 aa).

Residues aspartate 4, glutamate 65, and aspartate 138 contribute to the active site. Aspartate 4, glutamate 65, and aspartate 138 together coordinate Mg(2+).

Belongs to the RuvC family. As to quaternary structure, homodimer which binds Holliday junction (HJ) DNA. The HJ becomes 2-fold symmetrical on binding to RuvC with unstacked arms; it has a different conformation from HJ DNA in complex with RuvA. In the full resolvosome a probable DNA-RuvA(4)-RuvB(12)-RuvC(2) complex forms which resolves the HJ. The cofactor is Mg(2+).

Its subcellular location is the cytoplasm. It carries out the reaction Endonucleolytic cleavage at a junction such as a reciprocal single-stranded crossover between two homologous DNA duplexes (Holliday junction).. In terms of biological role, the RuvA-RuvB-RuvC complex processes Holliday junction (HJ) DNA during genetic recombination and DNA repair. Endonuclease that resolves HJ intermediates. Cleaves cruciform DNA by making single-stranded nicks across the HJ at symmetrical positions within the homologous arms, yielding a 5'-phosphate and a 3'-hydroxyl group; requires a central core of homology in the junction. The consensus cleavage sequence is 5'-(A/T)TT(C/G)-3'. Cleavage occurs on the 3'-side of the TT dinucleotide at the point of strand exchange. HJ branch migration catalyzed by RuvA-RuvB allows RuvC to scan DNA until it finds its consensus sequence, where it cleaves and resolves the cruciform DNA. The polypeptide is Crossover junction endodeoxyribonuclease RuvC (Corynebacterium jeikeium (strain K411)).